We begin with the raw amino-acid sequence, 428 residues long: Hydrolase acrC (428 aa).

Ser-248 is a catalytic residue.

Belongs to the AB hydrolase superfamily. FUS2 hydrolase family.

It participates in secondary metabolite biosynthesis. In terms of biological role, hydrolase; part of the cluster that mediates the biosynthesis of acurin A, a highly reduced polyketide coupled to a serine via a peptide bond. The activities of the highly reducing polyketide synthase acrA and the nonribosomal peptide synthetase acrB are collectively responsible for the synthesis of the acurin A core structure with a heptaketide backbone produced by acrA covalently fused to a L-serine by acrB. After the formation of the PK-NRP hybrid product, it is detached from acrB by reductive release to set up the formation of the lactam ring by aldol condensation. The hydrolyase acrC then catalyzes water loss to generate a double bond in the ring. This double bond is probably reduced, which is followed by three oxidations at C-22 to generate the carboxylic acid moiety, involving probably the FAD-binding monooxygenase acrE and the cytochrome P450 monooxygenases acrD and acrF. Finally, a last methylation step performed by the O-methyltransferase acrG leads to the production of acurin A. This chain is Hydrolase acrC, found in Aspergillus aculeatus (strain ATCC 16872 / CBS 172.66 / WB 5094).